Reading from the N-terminus, the 397-residue chain is MAKEKFERTKPHVNIGTIGHIDHGKTTLTAAITKHAALRGFGKFVAFDEIDKAPEERERGITISTAHVEYETAKRHYAHVDCPGHADYIKNMITGAAQMDGAILVVSADDGPMPQTREHILLARQVGVPSIVVFLNKCDMVDDEELIELVEMELQELLTKYEFPGDDTPIVRGSALKALEADTSDDPAAEPILKLLDVLDEYVKEPVRDTDKDFLMPIEDVFSISGRGTVVTGRIDRGIIKTGEEVELVGIRDTTKTICTGVEMFRKLLDEGRAGDNVGLLLRGTKRDAVERGQVVAKPGTITPHTKFKAEIYCLSKEEGGRHTPFFSGYRPQFFFRTTDVTGVLSLPEGVEMIMPGDNAAITAELIAPIAMEKELRFAIREGGRTVGAGVIGEIIE.

The tr-type G domain maps to 10–207; it reads KPHVNIGTIG…VLDEYVKEPV (198 aa). The G1 stretch occupies residues 19–26; it reads GHIDHGKT. Position 19-26 (19-26) interacts with GTP; the sequence is GHIDHGKT. Threonine 26 lines the Mg(2+) pocket. Residues 60-64 are G2; it reads GITIS. Positions 81 to 84 are G3; sequence DCPG. GTP is bound by residues 81–85 and 136–139; these read DCPGH and NKCD. The tract at residues 136–139 is G4; it reads NKCD. The interval 174-176 is G5; that stretch reads SAL.

The protein belongs to the TRAFAC class translation factor GTPase superfamily. Classic translation factor GTPase family. EF-Tu/EF-1A subfamily. In terms of assembly, monomer.

Its subcellular location is the cytoplasm. It catalyses the reaction GTP + H2O = GDP + phosphate + H(+). GTP hydrolase that promotes the GTP-dependent binding of aminoacyl-tRNA to the A-site of ribosomes during protein biosynthesis. The protein is Elongation factor Tu of Desulforapulum autotrophicum (strain ATCC 43914 / DSM 3382 / VKM B-1955 / HRM2) (Desulfobacterium autotrophicum).